Consider the following 256-residue polypeptide: MSTLDIHQIAVLSDNYIYLVRCRATGACAVIDPSLAEPVLAAAESLGWTITHILNTHHHYDHTGGNEEIKAATGCEIIGFAGDAHRLPGIDRTVVEGDRVAIGQAEARVIETPGHTLGHIAYWFAESSALFCGDTLFSAGCGRLFEGSAGQMWDSLRKLRALPAQTLVFCGHEYTQPNITFALTIDPRNEALRARALEVDALRAAGRPTVPAFLGDEARSNPFLRADSADFQEAFGMTGADPVEVFARTRLKKDHF.

Zn(2+) is bound by residues H57, H59, D61, H62, H115, D134, and H172.

This sequence belongs to the metallo-beta-lactamase superfamily. Glyoxalase II family. In terms of assembly, monomer. Zn(2+) is required as a cofactor.

It carries out the reaction an S-(2-hydroxyacyl)glutathione + H2O = a 2-hydroxy carboxylate + glutathione + H(+). It functions in the pathway secondary metabolite metabolism; methylglyoxal degradation; (R)-lactate from methylglyoxal: step 2/2. Functionally, thiolesterase that catalyzes the hydrolysis of S-D-lactoyl-glutathione to form glutathione and D-lactic acid. The protein is Hydroxyacylglutathione hydrolase of Rhodospirillum rubrum (strain ATCC 11170 / ATH 1.1.1 / DSM 467 / LMG 4362 / NCIMB 8255 / S1).